An 849-amino-acid polypeptide reads, in one-letter code: Protein translocase subunit SecA (849 aa).

ATP contacts are provided by residues Gln85, 103 to 107 (GEGKT), and Asp493. Cys832, Cys834, Cys843, and His844 together coordinate Zn(2+).

Belongs to the SecA family. Monomer and homodimer. Part of the essential Sec protein translocation apparatus which comprises SecA, SecYEG and auxiliary proteins SecDF. Other proteins may also be involved. Zn(2+) serves as cofactor.

The protein localises to the cell membrane. The protein resides in the cytoplasm. It catalyses the reaction ATP + H2O + cellular proteinSide 1 = ADP + phosphate + cellular proteinSide 2.. In terms of biological role, part of the Sec protein translocase complex. Interacts with the SecYEG preprotein conducting channel. Has a central role in coupling the hydrolysis of ATP to the transfer of proteins into and across the cell membrane, serving as an ATP-driven molecular motor driving the stepwise translocation of polypeptide chains across the membrane. In Streptococcus thermophilus (strain CNRZ 1066), this protein is Protein translocase subunit SecA.